We begin with the raw amino-acid sequence, 219 residues long: MAKKKFSKDWIHQHINDPYVKLAQQKGYRARAAFKLIEILEVEKLLKKGDVVVDLGSAPGSWSQVVRERLAGPGGVVDGRIIALDLLPMEPIAGVEFFQGDFRDDEVLHELERRVGNHAVDLVISDMAPNLSGVGVADSARIQHVCDLALEFSCAHLKPNGVLIVKAFHGSGFSQIVQSFKQRFKRVVERKPKASRDKSSETFLVARDLKDPVLNQTTE.

S-adenosyl-L-methionine is bound by residues Gly60, Trp62, Asp85, Asp101, and Asp126. Lys166 functions as the Proton acceptor in the catalytic mechanism.

The protein belongs to the class I-like SAM-binding methyltransferase superfamily. RNA methyltransferase RlmE family.

It is found in the cytoplasm. The catalysed reaction is uridine(2552) in 23S rRNA + S-adenosyl-L-methionine = 2'-O-methyluridine(2552) in 23S rRNA + S-adenosyl-L-homocysteine + H(+). Its function is as follows. Specifically methylates the uridine in position 2552 of 23S rRNA at the 2'-O position of the ribose in the fully assembled 50S ribosomal subunit. The sequence is that of Ribosomal RNA large subunit methyltransferase E from Bordetella avium (strain 197N).